The sequence spans 264 residues: MNYIMCRNNLSQSSLPQLSSSAVNDANIDYFSLKPKLSLDTNSSGNSEIIYSDCDNNKNNNDDDDDDDDYNKDTYDELLDPFDTIAVNQHDLEYYSPLTPFEIQNTSPQDSIISSKSSNKSNSLQPFPLTLPNLTNYRFLIVDDNIINLKILNRVLLKLYPRSNIVQVQDSKLVNEILQRQHFDSVFLDIEMPDITGIDIAKFIRSDERFNQMAVIAVTTRNSAKDLQQYKECGIDHTFHKPLNYSLDLIGGSIDDIIERRKSL.

The tract at residues 50 to 74 (IYSDCDNNKNNNDDDDDDDDYNKDT) is disordered. The span at 62–74 (DDDDDDDDYNKDT) shows a compositional bias: acidic residues. Residues 138–256 (RFLIVDDNII…LDLIGGSIDD (119 aa)) enclose the Response regulatory domain. Aspartate 189 is modified (4-aspartylphosphate).

Its function is as follows. Required for stress adaptation, morphogenesis and virulence. The protein is Stress response regulator protein 1 (SRR1) of Candida tropicalis (strain ATCC MYA-3404 / T1) (Yeast).